The primary structure comprises 657 residues: ER degradation-enhancing alpha-mannosidase-like protein 1 (657 aa).

At 1-4 (MQWR) the chain is on the cytoplasmic side. A helical; Signal-anchor for type II membrane protein membrane pass occupies residues 5-25 (ALVLGLVLLRLGLHGVLWLVF). Topologically, residues 26–657 (GLGPSMGFYQ…RQIDQMVGLI (632 aa)) are lumenal. The disordered stretch occupies residues 48–94 (SPDGPASPTSGPVGRPGGVSGPSWLQPPGTGAAQSPRKAPRRPGPGM). Residues Asn-181, Asn-198, Asn-299, Asn-342, and Asn-624 are each glycosylated (N-linked (GlcNAc...) asparagine).

It belongs to the glycosyl hydrolase 47 family. Interacts with DNAJC10. Interacts with DERL2 and DERL3. Binds to SEL1L.

The protein localises to the endoplasmic reticulum membrane. Extracts misfolded glycoproteins, but not glycoproteins undergoing productive folding, from the calnexin cycle. It is directly involved in endoplasmic reticulum-associated degradation (ERAD) and targets misfolded glycoproteins for degradation in an N-glycan-independent manner, probably by forming a complex with SEL1L. It has low mannosidase activity, catalyzing mannose trimming from Man8GlcNAc2 to Man7GlcNAc2. This is ER degradation-enhancing alpha-mannosidase-like protein 1 (EDEM1) from Homo sapiens (Human).